The primary structure comprises 344 residues: N-acetyl-gamma-glutamyl-phosphate reductase (344 aa).

Cysteine 150 is a catalytic residue.

This sequence belongs to the NAGSA dehydrogenase family. Type 1 subfamily.

The protein resides in the cytoplasm. The enzyme catalyses N-acetyl-L-glutamate 5-semialdehyde + phosphate + NADP(+) = N-acetyl-L-glutamyl 5-phosphate + NADPH + H(+). It functions in the pathway amino-acid biosynthesis; L-arginine biosynthesis; N(2)-acetyl-L-ornithine from L-glutamate: step 3/4. Catalyzes the NADPH-dependent reduction of N-acetyl-5-glutamyl phosphate to yield N-acetyl-L-glutamate 5-semialdehyde. The chain is N-acetyl-gamma-glutamyl-phosphate reductase from Pseudomonas aeruginosa (strain ATCC 15692 / DSM 22644 / CIP 104116 / JCM 14847 / LMG 12228 / 1C / PRS 101 / PAO1).